The sequence spans 312 residues: Cathepsin O (312 aa).

The N-terminal stretch at 1–23 is a signal peptide; sequence MKPQLVNLLLLCCCCLGRHGVAG. A propeptide spans 24-98 (activation peptide); sequence TWSWSHQREA…EGQRPIPNVS (75 aa). N53 and N96 each carry an N-linked (GlcNAc...) asparagine glycan. 3 cysteine pairs are disulfide-bonded: C120-C161, C154-C195, and C253-C301. The active site involves C123. Residues H260 and N280 contribute to the active site.

The protein belongs to the peptidase C1 family.

The protein localises to the lysosome. The catalysed reaction is The recombinant human enzyme hydrolyzes synthetic endopeptidase substrates including Z-Phe-Arg-NHMec and Z-Arg-Arg-NHMec.. Functionally, proteolytic enzyme possibly involved in normal cellular protein degradation and turnover. This Mus musculus (Mouse) protein is Cathepsin O (Ctso).